A 400-amino-acid polypeptide reads, in one-letter code: Homoserine O-acetyltransferase (400 aa).

Over residues 1 to 11 the composition is skewed to polar residues; the sequence is MVKVQSIQSQA. The segment at 1-24 is disordered; it reads MVKVQSIQSQAVHAEERAHEADHP. Residues 13 to 23 show a composition bias toward basic and acidic residues; sequence HAEERAHEADH. An AB hydrolase-1 domain is found at 64 to 373; the sequence is NAILVCHALT…TDRGHDAFLL (310 aa). The active-site Nucleophile is serine 169. A substrate-binding site is contributed by arginine 239. Residues aspartate 335 and histidine 368 contribute to the active site. Aspartate 369 lines the substrate pocket.

Belongs to the AB hydrolase superfamily. MetX family. In terms of assembly, homodimer.

It localises to the cytoplasm. The enzyme catalyses L-homoserine + acetyl-CoA = O-acetyl-L-homoserine + CoA. The protein operates within amino-acid biosynthesis; L-methionine biosynthesis via de novo pathway; O-acetyl-L-homoserine from L-homoserine: step 1/1. Transfers an acetyl group from acetyl-CoA to L-homoserine, forming acetyl-L-homoserine. In Rhodopseudomonas palustris (strain BisB18), this protein is Homoserine O-acetyltransferase.